A 1021-amino-acid polypeptide reads, in one-letter code: Disease resistance protein Pikm2-TS (1021 aa).

The structured coiled coil (CC) domain stretch occupies residues 1–182; sequence MELVVGASEA…PQIIGIKEPV (182 aa). An NB-ARC domain is found at 186–519; that stretch reads TVMEELEVWL…WIAEGFANEK (334 aa). The disordered stretch occupies residues 297–317; the sequence is PENDGNPDNTPIRLQETTDDD. LRR repeat units follow at residues 612–634, 659–682, and 683–705; these read LAQV…SFNY, MLLL…IQKL, and EYLE…IVQL. The tract at residues 719-751 is disordered; that stretch reads RKGLRLPQEKSKKPIKNPSPQGKTKEPAKKGFL. 6 LRR repeats span residues 785-807, 817-841, 843-865, 866-888, 912-935, and 957-981; these read LTGL…TFKQ, SCGL…DMPA, PRYL…ITSI, TTLN…ILHI, KDIL…GFKS, and MPAL…ILEN.

This sequence belongs to the disease resistance NB-LRR family. As to expression, constitutively expressed.

Disease resistance (R) protein. Resistance proteins guard the plant against pathogens that contain an appropriate avirulence protein via an indirect interaction with this avirulence protein. That triggers a defense system including the hypersensitive response, which restricts the pathogen growth. Contribution of Pikm-1 is required to recognize the effector avirulence protein AVR-Pik. This chain is Disease resistance protein Pikm2-TS, found in Oryza sativa subsp. japonica (Rice).